The primary structure comprises 1122 residues: AP-4 complex subunit epsilon-1 (1122 aa).

Ser699 carries the phosphoserine modification. Composition is skewed to basic and acidic residues over residues 714–728 and 745–760; these read YLPK…KPEA and TTRK…STEE. Disordered stretches follow at residues 714-760 and 797-861; these read YLPK…STEE and SKLK…AEKL. Positions 726 to 1122 are interaction with TEPSIN; that stretch reads PEASHVPAEG…CHCQKVMQTS (397 aa). A compositionally biased stretch (low complexity) spans 841–853; the sequence is ELSSELFRSESLS. Residue Ser851 is modified to Phosphoserine.

This sequence belongs to the adaptor complexes large subunit family. In terms of assembly, adaptor protein complex 4 (AP-4) is a heterotetramer composed of two large adaptins (epsilon-type subunit AP4E1 and beta-type subunit AP4B1), a medium adaptin (mu-type subunit AP4M1) and a small adaptin (sigma-type AP4S1). Interacts with TEPSIN. Interacts with GRIA2; probably indirect it mediates the somatodendritic localization of GRIA2 in neurons.

The protein localises to the golgi apparatus. Its subcellular location is the trans-Golgi network membrane. Functionally, component of the adaptor protein complex 4 (AP-4). Adaptor protein complexes are vesicle coat components involved both in vesicle formation and cargo selection. They control the vesicular transport of proteins in different trafficking pathways. AP-4 forms a non clathrin-associated coat on vesicles departing the trans-Golgi network (TGN) and may be involved in the targeting of proteins from the trans-Golgi network (TGN) to the endosomal-lysosomal system. It is also involved in protein sorting to the basolateral membrane in epithelial cells and the proper asymmetric localization of somatodendritic proteins in neurons. AP-4 is involved in the recognition and binding of tyrosine-based sorting signals found in the cytoplasmic part of cargos, but may also recognize other types of sorting signal. In Mus musculus (Mouse), this protein is AP-4 complex subunit epsilon-1.